The following is an 88-amino-acid chain: Carboxysome shell vertex protein CsoS4A (88 aa).

A BMV domain is found at 1–76 (MLICKVLKPL…SDLTIVGIID (76 aa)).

The protein belongs to the CcmL/EutN family. CsoS4 subfamily. In terms of assembly, homopentamer.

The protein localises to the carboxysome. Functionally, probably forms vertices in the carboxysome, a polyhedral inclusion where RuBisCO (ribulose bisphosphate carboxylase, cbbL-cbbS) is sequestered. Has been modeled to induce curvature upon insertion into an otherwise flat hexagonal layer of major carboxysome subunits. Has not been identified in purified carboxysomes; it is expected to be present in very low amounts. The protein is Carboxysome shell vertex protein CsoS4A of Prochlorococcus marinus subsp. pastoris (strain CCMP1986 / NIES-2087 / MED4).